The sequence spans 116 residues: NADH-ubiquinone oxidoreductase chain 3 (116 aa).

The next 3 membrane-spanning stretches (helical) occupy residues 3–23 (LITT…TISF), 56–76 (FFLI…LLPL), and 85–105 (PALT…GLIY).

The protein belongs to the complex I subunit 3 family.

The protein localises to the mitochondrion membrane. It carries out the reaction a ubiquinone + NADH + 5 H(+)(in) = a ubiquinol + NAD(+) + 4 H(+)(out). In terms of biological role, core subunit of the mitochondrial membrane respiratory chain NADH dehydrogenase (Complex I) that is believed to belong to the minimal assembly required for catalysis. Complex I functions in the transfer of electrons from NADH to the respiratory chain. The immediate electron acceptor for the enzyme is believed to be ubiquinone. The polypeptide is NADH-ubiquinone oxidoreductase chain 3 (MT-ND3) (Oncorhynchus masou (Cherry salmon)).